The sequence spans 99 residues: U11-barytoxin-Tl1a (99 aa).

Positions 1 to 21 are cleaved as a signal peptide; that stretch reads MKTLVLVAVLGLASLYLLSYA. Residues 22–50 constitute a propeptide that is removed on maturation; sequence SEVQQISRDEEDFRALMASFGGIFDTEER. Intrachain disulfides connect cysteine 57–cysteine 71, cysteine 64–cysteine 76, and cysteine 70–cysteine 90.

The protein belongs to the neurotoxin 10 (Hwtx-1) family. 25 (ICK4) subfamily. Expressed by the venom gland.

The protein resides in the secreted. Its function is as follows. Ion channel inhibitor. The sequence is that of U11-barytoxin-Tl1a from Trittame loki (Brush-footed trapdoor spider).